A 574-amino-acid chain; its full sequence is MATLVVNKLGAGVDSGRQGSRGTAVVKVLECGVCEDVFSLQGDKVPRLLLCGHTVCHDCLTRLPLHGRAIRCPFDRQVTDLGDSGVWGLKKNFALLELLERLQNGPIGQYGAAEESIGISGESIIRCDEDEAHLASVYCTVCATHLCSECSQVTHSTKTLAKHRRVPLADKPHEKTMCSQHQVHAIEFVCLEEGCQTSPLMCCVCKEYGKHQGHKHSVLEPEANQIRASILDMAHCIRTFTEEISDYSRKLVGIVQHIEGGEQIVEDGIGMAHTEHVPGTAENARSCIRAYFYDLHETLCRQEEMALSVVDAHVREKLIWLRQQQEDMTILLSEVSAACLHCEKTLQQDDCRVVLAKQEITRLLETLQKQQQQFTEVADHIQLDASIPVTFTKDNRVHIGPKMEIRVVTLGLDGAGKTTILFKLKQDEFMQPIPTIGFNVETVEYKNLKFTIWDVGGKHKLRPLWKHYYLNTQAVVFVVDSSHRDRISEAHSELAKLLTEKELRDALLLIFANKQDVAGALSVEEITELLSLHKLCCGRSWYIQGCDARSGMGLYEGLDWLSRQLVAAGVLDVA.

An RING-type; degenerate zinc finger spans residues 31 to 76 (CGVCEDVFSLQGDKVPRLLLCGHTVCHDCLTRLPLHGRAIRCPFDR). A B box-type; degenerate zinc finger spans residues 122–168 (ESIIRCDEDEAHLASVYCTVCATHLCSECSQVTHSTKTLAKHRRVPL). A coiled-coil region spans residues 352 to 379 (RVVLAKQEITRLLETLQKQQQQFTEVAD). The segment at 390 to 574 (TFTKDNRVHI…LVAAGVLDVA (185 aa)) is ARF-like. GTP-binding positions include 411–418 (GLDGAGKT), 454–458 (DVGGK), and 513–516 (NKQD).

It in the C-terminal section; belongs to the small GTPase superfamily. Arf family. Homodimer. Interacts with PSCD1. Interacts with UBE2D2. Interacts with TBK1 (via N-terminal kinase domain) and p62/SQSTM1. As to quaternary structure, (Microbial infection) Interacts with human cytomegalovirus protein UL144; this interaction might cause autoubiquitination of TRAF6, leading to NF-kappa-B activation.

It localises to the cytoplasm. Its subcellular location is the endomembrane system. It is found in the golgi apparatus membrane. The protein localises to the lysosome membrane. The enzyme catalyses S-ubiquitinyl-[E2 ubiquitin-conjugating enzyme]-L-cysteine + [acceptor protein]-L-lysine = [E2 ubiquitin-conjugating enzyme]-L-cysteine + N(6)-ubiquitinyl-[acceptor protein]-L-lysine.. It participates in protein modification; protein ubiquitination. In terms of biological role, acts as an E3 ubiquitin-protein ligase. Plays an essential role in autophagy activation during viral infection. Mechanistically, activates TANK-binding kinase 1/TBK1 by facilitating its dimerization and ability to phosphorylate the selective autophagy receptor SQSTM1. In order to achieve this function, TRIM23 mediates 'Lys-27'-linked auto-ubiquitination of its ADP-ribosylation factor (ARF) domain to induce its GTPase activity and its recruitment to autophagosomes. (Microbial infection) Mediates TRAF6 auto-ubiquitination in the presence of human cytomegalovirus protein UL144, resulting in the virally controlled activation of NF-kappa-B stimulation at early times of HCMV infection. The protein is E3 ubiquitin-protein ligase TRIM23 (TRIM23) of Homo sapiens (Human).